The following is a 160-amino-acid chain: Anaerobic nitrite reductase MHB1 (160 aa).

The Globin domain maps to 8–157; sequence GFTEEQEALV…LVNAIKSEMK (150 aa). The Homodimerization signature appears at 41 to 45; sequence EIAPS. Heme b is bound by residues Ser51, Lys65, His69, Lys99, and His104. Residues 111–123 carry the Homodimerization motif; the sequence is DEHFEVTKFALLE.

It belongs to the plant globin family. As to quaternary structure, homodimer. Heme b is required as a cofactor. As to expression, root specific.

The protein localises to the nucleus matrix. It localises to the cytoplasm. The enzyme catalyses Fe(III)-heme b-[protein] + nitric oxide + H2O = Fe(II)-heme b-[protein] + nitrite + 2 H(+). Phytoglobin that reduces nitrite to nitric oxide (NO) under anoxic conditions (e.g. during flooding or in waterlogged soil) and upon root nodulation. Required for general plant development and during nodulation, especially for the onset of symbiosis. Monitors nitric oxide (NO) levels during early phase of the nitrogen-fixing symbiosis and buffers oxygen in functioning nodules. May not function as an oxygen storage or transport protein. Has an unusually high affinity for O(2) through a hexacoordinate heme iron because of a very low dissociation constant. The chain is Anaerobic nitrite reductase MHB1 from Medicago sativa (Alfalfa).